Here is a 358-residue protein sequence, read N- to C-terminus: Cilia- and flagella-associated protein 263 (358 aa).

Coiled-coil stretches lie at residues 93 to 138 (YKKM…FKRN), 176 to 200 (RKNS…EMAE), and 266 to 343 (RTKL…YTKS).

It belongs to the CFAP263 family. Forms a complex with CFAP184; the interaction is required for functional activity in cilia. Interacts with HAP1 and PCM1.

It localises to the cytoplasm. The protein localises to the cytoskeleton. The protein resides in the microtubule organizing center. It is found in the centrosome. Its subcellular location is the centriolar satellite. It localises to the cell projection. The protein localises to the cilium. In terms of biological role, component of centriolar satellites contributing to primary cilium formation. In complex with CFAP263, acts as a regulator of ciliary beating that connects radial spoke 3 (RS3) to the inner dynein arm (IDA) and the nexin-dynein regulatory complex (N-DRC). The complex is positioned parallel to N-DRC and forms a connection between the arch at the base of RS3, the IDA tail and N-DRC. The protein is Cilia- and flagella-associated protein 263 (cfap263) of Danio rerio (Zebrafish).